The chain runs to 360 residues: Peptide chain release factor 1 (360 aa).

At Gln-237 the chain carries N5-methylglutamine.

The protein belongs to the prokaryotic/mitochondrial release factor family. In terms of processing, methylated by PrmC. Methylation increases the termination efficiency of RF1.

It is found in the cytoplasm. Functionally, peptide chain release factor 1 directs the termination of translation in response to the peptide chain termination codons UAG and UAA. This is Peptide chain release factor 1 from Pseudomonas putida (strain ATCC 47054 / DSM 6125 / CFBP 8728 / NCIMB 11950 / KT2440).